Reading from the N-terminus, the 171-residue chain is Adenine phosphoribosyltransferase (171 aa).

The protein belongs to the purine/pyrimidine phosphoribosyltransferase family. Homodimer.

The protein resides in the cytoplasm. The catalysed reaction is AMP + diphosphate = 5-phospho-alpha-D-ribose 1-diphosphate + adenine. It participates in purine metabolism; AMP biosynthesis via salvage pathway; AMP from adenine: step 1/1. In terms of biological role, catalyzes a salvage reaction resulting in the formation of AMP, that is energically less costly than de novo synthesis. The polypeptide is Adenine phosphoribosyltransferase (Acidiphilium cryptum (strain JF-5)).